A 492-amino-acid polypeptide reads, in one-letter code: Catalase (492 aa).

Catalysis depends on residues His-65 and Asn-138. Heme is bound at residue Tyr-348.

It belongs to the catalase family. As to quaternary structure, homotetramer. Heme serves as cofactor.

The protein resides in the cytoplasm. It is found in the cytosol. Its subcellular location is the peroxisome matrix. The enzyme catalyses 2 H2O2 = O2 + 2 H2O. Its function is as follows. Catalyzes the degradation of hydrogen peroxide (H(2)O(2)) generated by peroxisomal oxidases to water and oxygen, thereby protecting cells from the toxic effects of hydrogen peroxide. This is Catalase from Vigna radiata var. radiata (Mung bean).